A 594-amino-acid chain; its full sequence is DNA polymerase II small subunit (594 aa).

This sequence belongs to the DNA polymerase delta/II small subunit family. As to quaternary structure, heterodimer of a large subunit and a small subunit.

The catalysed reaction is DNA(n) + a 2'-deoxyribonucleoside 5'-triphosphate = DNA(n+1) + diphosphate. It catalyses the reaction Exonucleolytic cleavage in the 3'- to 5'-direction to yield nucleoside 5'-phosphates.. Possesses two activities: a DNA synthesis (polymerase) and an exonucleolytic activity that degrades single-stranded DNA in the 3' to 5' direction. Has a template-primer preference which is characteristic of a replicative DNA polymerase. The sequence is that of DNA polymerase II small subunit (polB) from Methanocaldococcus jannaschii (strain ATCC 43067 / DSM 2661 / JAL-1 / JCM 10045 / NBRC 100440) (Methanococcus jannaschii).